The sequence spans 105 residues: UPF0145 protein Aflv_1588 (105 aa).

It belongs to the UPF0145 family.

In Anoxybacillus flavithermus (strain DSM 21510 / WK1), this protein is UPF0145 protein Aflv_1588.